The chain runs to 80 residues: Small ribosomal subunit protein uS17 (80 aa).

It belongs to the universal ribosomal protein uS17 family. Part of the 30S ribosomal subunit.

Its function is as follows. One of the primary rRNA binding proteins, it binds specifically to the 5'-end of 16S ribosomal RNA. This chain is Small ribosomal subunit protein uS17, found in Cereibacter sphaeroides (strain ATCC 17029 / ATH 2.4.9) (Rhodobacter sphaeroides).